Reading from the N-terminus, the 1439-residue chain is Receptor-type tyrosine-protein phosphatase kappa (1439 aa).

Positions 1–26 (MDTTAAAALPAFVALLLLSPWPLLGS) are cleaved as a signal peptide. Topologically, residues 27-752 (AQGQFSAGGC…PAKQTDRVVK (726 aa)) are extracellular. One can recognise an MAM domain in the interval 31–194 (FSAGGCTFDD…IQVLSYPCDK (164 aa)). N-linked (GlcNAc...) asparagine glycosylation is found at Asn101, Asn140, and Asn211. Positions 196-281 (PHFLRLGDVE…TQSERGSGVS (86 aa)) constitute an Ig-like C2-type domain. A disulfide bond links Cys216 and Cys270. Fibronectin type-III domains lie at 294-389 (PIAP…CAEP), 392-488 (TPKT…TDED), 491-595 (GPVP…SAPT), and 597-680 (PDYE…GNLP). N-linked (GlcNAc...) asparagine glycosylation is found at Asn416, Asn424, Asn436, Asn462, Asn552, Asn586, Asn590, Asn607, and Asn690. The helical transmembrane segment at 753 to 774 (IAGISAGILVFILLLLVVILIV) threads the bilayer. At 775-1439 (KKSKLAKKRK…DVALEYLESS (665 aa)) the chain is on the cytoplasmic side. Residue Ser856 is modified to Phosphoserine. 2 Tyrosine-protein phosphatase domains span residues 887–1141 (FKEE…ILEA) and 1173–1435 (LKDE…ALEY). Residues Asp1050, 1082 to 1088 (CSAGAGR), and Gln1126 contribute to the substrate site. The Phosphocysteine intermediate role is filled by Cys1082. The Phosphocysteine intermediate role is filled by Cys1376.

This sequence belongs to the protein-tyrosine phosphatase family. Receptor class 2B subfamily. Post-translationally, this protein undergoes proteolytic processing. High levels in lung, brain and colon; less in liver, pancreas, stomach, kidney, placenta and mammary carcinoma.

Its subcellular location is the cell junction. It localises to the adherens junction. The protein localises to the cell membrane. The catalysed reaction is O-phospho-L-tyrosyl-[protein] + H2O = L-tyrosyl-[protein] + phosphate. In terms of biological role, regulation of processes involving cell contact and adhesion such as growth control, tumor invasion, and metastasis. Negative regulator of EGFR signaling pathway. Forms complexes with beta-catenin and gamma-catenin/plakoglobin. Beta-catenin may be a substrate for the catalytic activity of PTPRK/PTP-kappa. This chain is Receptor-type tyrosine-protein phosphatase kappa (PTPRK), found in Homo sapiens (Human).